The following is a 158-amino-acid chain: UPF0262 protein Rsph17029_2283 (158 aa).

The protein belongs to the UPF0262 family.

This is UPF0262 protein Rsph17029_2283 from Cereibacter sphaeroides (strain ATCC 17029 / ATH 2.4.9) (Rhodobacter sphaeroides).